The sequence spans 323 residues: Large ribosomal subunit protein uL10x (323 aa).

Residues 287 to 323 (DAGGGSAQAGAAAKVEEKKEESDEEDYEGGFGLFDEE) are disordered. The residue at position 308 (Ser-308) is a Phosphoserine. A compositionally biased stretch (acidic residues) spans 308-323 (SDEEDYEGGFGLFDEE). Tyr-313 bears the Phosphotyrosine mark.

The protein belongs to the universal ribosomal protein uL10 family. In terms of assembly, P0 forms a pentameric complex by interaction with dimers of P1 and P2.

Its function is as follows. Ribosomal protein P0 is the functional equivalent of E.coli protein L10. This chain is Large ribosomal subunit protein uL10x (RPP0C), found in Arabidopsis thaliana (Mouse-ear cress).